Here is a 316-residue protein sequence, read N- to C-terminus: NAC domain-containing protein 2 (316 aa).

The region spanning 17-170 (LPPGFRFHPT…DWVLCRLYNK (154 aa)) is the NAC domain. Residues 114-176 (LGIKKALVFY…LYNKKNEWEK (63 aa)) mediate DNA binding. Residues 185–210 (EEASDMVTSQSHSHTHSWGETRTPES) form a disordered region. A compositionally biased stretch (polar residues) spans 190-200 (MVTSQSHSHTH).

As to quaternary structure, forms homodimer. Interacts with NAC071. As to expression, expressed in roots and stamens.

The protein localises to the nucleus. Functionally, transcription factor that possesses transactivation activity. Transcription activator involved in response to abiotic stresses. Plays a positive role during dehydration and salt stress. Binds specifically to the 5'-CATGTG-3' motif found in promoters of stress-responsive genes. In Oryza sativa subsp. japonica (Rice), this protein is NAC domain-containing protein 2.